The chain runs to 551 residues: Probable 4-coumarate--CoA ligase 3 (551 aa).

ATP-binding residues include Ser205, Ser206, Gly207, Thr208, Thr209, and Lys213. Residue Phe253 coordinates (E)-4-coumaroyl-AMP. Lys274 provides a ligand contact to CoA. The segment at 276 to 346 (EPVRFLELIK…RFKGRLVIKQ (71 aa)) is SBD1. Residues Ala323, Gln346, Gly347, and Thr351 each coordinate (E)-4-coumaroyl-AMP. Gln346, Gly347, Thr351, Asp430, and Arg445 together coordinate ATP. An SBD2 region spans residues 347–409 (GYGATELSPC…IKGPNVMLGY (63 aa)). Residues Lys447 and Lys451 each coordinate (E)-4-coumaroyl-AMP. Residues Lys453 and Gly454 each contribute to the CoA site. Lys537 serves as a coordination point for ATP.

The protein belongs to the ATP-dependent AMP-binding enzyme family. The cofactor is Mg(2+).

The enzyme catalyses (E)-4-coumarate + ATP + CoA = (E)-4-coumaroyl-CoA + AMP + diphosphate. It carries out the reaction (E)-4-coumarate + ATP + H(+) = (E)-4-coumaroyl-AMP + diphosphate. It catalyses the reaction (E)-4-coumaroyl-AMP + CoA = (E)-4-coumaroyl-CoA + AMP + H(+). It functions in the pathway phytoalexin biosynthesis; 3,4',5-trihydroxystilbene biosynthesis; 3,4',5-trihydroxystilbene from trans-4-coumarate: step 1/2. Carboxylate--CoA ligase that may use 4-coumarate as substrate. Follows a two-step reaction mechanism, wherein the carboxylate substrate first undergoes adenylation by ATP, followed by a thioesterification in the presence of CoA to yield the final CoA thioester. The sequence is that of Probable 4-coumarate--CoA ligase 3 (4cl3) from Dictyostelium discoideum (Social amoeba).